The sequence spans 396 residues: Elongation factor Tu (396 aa).

In terms of domain architecture, tr-type G spans 10-205 (KTHANIGTIG…AVDEYIPTPE (196 aa)). The G1 stretch occupies residues 19–26 (GHVDHGKT). 19 to 26 (GHVDHGKT) provides a ligand contact to GTP. Threonine 26 lines the Mg(2+) pocket. The segment at 61 to 65 (GITIS) is G2. Residues 82-85 (DCPG) form a G3 region. Residues 82–86 (DCPGH) and 137–140 (NKCD) each bind GTP. The tract at residues 137–140 (NKCD) is G4. Residues 175–177 (SAL) are G5.

The protein belongs to the TRAFAC class translation factor GTPase superfamily. Classic translation factor GTPase family. EF-Tu/EF-1A subfamily. As to quaternary structure, monomer.

Its subcellular location is the cytoplasm. The catalysed reaction is GTP + H2O = GDP + phosphate + H(+). Functionally, GTP hydrolase that promotes the GTP-dependent binding of aminoacyl-tRNA to the A-site of ribosomes during protein biosynthesis. This chain is Elongation factor Tu, found in Shouchella clausii (strain KSM-K16) (Alkalihalobacillus clausii).